Here is a 272-residue protein sequence, read N- to C-terminus: Potassium channel regulatory protein (272 aa).

The region spanning 5–106 is the BTB domain; that stretch reads ELVTLNVGGK…LLNPYLLQPR (102 aa).

In terms of assembly, can form homooligomers. Interacts with KCNA1 (via cytoplasmic N-terminal domain) and KCNA4. In terms of tissue distribution, ubiquitous in normal tissues and expressed in some tumor tissues.

Its subcellular location is the endoplasmic reticulum. In terms of biological role, inhibits potassium fluxes in cells. May regulate Kv1 family channel proteins by retaining a fraction of channels in endomembranes. The protein is Potassium channel regulatory protein (KCNRG) of Homo sapiens (Human).